The sequence spans 541 residues: Protein yellow (541 aa).

Residues 1 to 21 (MFQDKGWVLLTLITLVSPSWA) form the signal peptide. N-linked (GlcNAc...) asparagine glycosylation occurs at asparagine 144.

This sequence belongs to the major royal jelly protein family.

The protein localises to the secreted. Its function is as follows. Controls the pigmentation pattern of the adult cuticle and larval mouth parts. The protein is Protein yellow (y) of Drosophila yakuba (Fruit fly).